Here is a 458-residue protein sequence, read N- to C-terminus: MASNGGSCPSSGGHMNGYPVPHYAFFFPHMLGGLSPPGSLAGIPHPLPVSAYSTPSPATIETQSTSSEEIVPSPPSPPPLPRIYKPCFVCQDKSSGYHYGVSACEGCKGFFRRSIQKNMVYTCHRDKTCIINKVTRNRCQYCRLQKCFEVGMSKESVRNDRNKKKKQEAPKQECTESYIITPEVEDLVEKVRKAHQETFPALCQLGKYTTNNSSEERVSLDIDLWDKFSELSTKCIIKTVEFAKQLPGFTTLTIADQITLLKAACLDILILRICTRYTPDQDTMTFSDGLTLNRTQMHNAGFGPLTDLVFAFANQLLPLEMDDAETGLLSAICLICGDRQDLEQPDKVDKLQEPLLEALKIYVRKRRPNKPHMFPKMLMKITDLRSISAKGAERVITLKMEIPGSMPPLIQEMLENSEGLDSLTGQPPRASSLAPPPGSCSPSLSPSSNRSSPTSHSP.

Positions 1–86 are modulating; that stretch reads MASNGGSCPS…PPPLPRIYKP (86 aa). Residues 54–68 show a composition bias toward polar residues; it reads TPSPATIETQSTSSE. Residues 54 to 76 form a disordered region; the sequence is TPSPATIETQSTSSEEIVPSPPS. NR C4-type zinc fingers lie at residues 87-107 and 123-147; these read CFVC…CEGC and CHRD…LQKC. A DNA-binding region (nuclear receptor) is located at residues 87-152; it reads CFVCQDKSSG…RLQKCFEVGM (66 aa). Positions 153–182 are hinge; sequence SKESVRNDRNKKKKQEAPKQECTESYIITP. Positions 183-417 constitute an NR LBD domain; the sequence is EVEDLVEKVR…PLIQEMLENS (235 aa). The 9aaTAD motif lies at 408-416; it reads PLIQEMLEN. Residues 417-458 form a disordered region; sequence SEGLDSLTGQPPRASSLAPPPGSCSPSLSPSSNRSSPTSHSP. The span at 440 to 458 shows a compositional bias: low complexity; that stretch reads CSPSLSPSSNRSSPTSHSP.

This sequence belongs to the nuclear hormone receptor family. NR1 subfamily. Heterodimer; with an rxr molecule. Binds DNA preferentially as a rar/rxr heterodimer. Expressed in forelimb, in the distal forelimb blastema, kidney, liver and hindlimb blastemal mesenchymal cells.

It localises to the nucleus. Receptor for retinoic acid. Retinoic acid receptors bind as heterodimers to their target response elements in response to their ligands, all-trans or 9-cis retinoic acid, and regulate gene expression in various biological processes. The rar/rxr heterodimers bind to the retinoic acid response elements (RARE) composed of tandem 5'-AGGTCA-3' sites known as DR1-DR5. Retinoic acid signaling appears to be involved in specifying proximal-distal axis in limb regeneration. This Notophthalmus viridescens (Eastern newt) protein is Retinoic acid receptor alpha (RARA).